The chain runs to 143 residues: Mediator of RNA polymerase II transcription subunit 10 (143 aa).

The disordered stretch occupies residues 123-143; that stretch reads GAHSNTEISTNPGQKRQGNVS. Positions 124-143 are enriched in polar residues; the sequence is AHSNTEISTNPGQKRQGNVS.

Belongs to the Mediator complex subunit 10 family. In terms of assembly, component of the Mediator complex.

The protein resides in the nucleus. In terms of biological role, component of the Mediator complex, a coactivator involved in the regulated transcription of nearly all RNA polymerase II-dependent genes. Mediator functions as a bridge to convey information from gene-specific regulatory proteins to the basal RNA polymerase II transcription machinery. Mediator is recruited to promoters by direct interactions with regulatory proteins and serves as a scaffold for the assembly of a functional preinitiation complex with RNA polymerase II and the general transcription factors. This is Mediator of RNA polymerase II transcription subunit 10 (NUT2) from Yarrowia lipolytica (strain CLIB 122 / E 150) (Yeast).